A 1718-amino-acid chain; its full sequence is MNQNTTEPVAATETLAEVPEHVLRGLPEEVRLFPSAVDKTRIGVWATKPILKGKKFGPFVGDKKKRSQVKNNVYMWEVYYPNLGWMCIDATDPEKGNWLRYVNWACSGEEQNLFPLEINRAIYYKTLKPIAPGEELLVWYNGEDNPEIAAAIEEERASARSKRSSPKSRKGKKKSQENKNKGNKIQDIQLKTSEPDFTSANMRDSAEGPKEDEEKPSASALEQPATLQEVASQEVPPELATPAPAWEPQPEPDERLEAAACEVNDLGEEEEEEEEEDEEEEEDDDDDELEDEGEEEASMPNENSVKEPEIRCDEKPEDLLEEPKTTSEETLEDCSEVTPAMQIPRTKEEANGDVFETFMFPCQHCERKFTTKQGLERHMHIHISTVNHAFKCKYCGKAFGTQINRRRHERRHEAGLKRKPSQTLQPSEDLADGKASGENVASKDDSSPPSLGPDCLIMNSEKASQDTINSSVVEENGEVKELHPCKYCKKVFGTHTNMRRHQRRVHERHLIPKGVRRKGGLEEPQPPAEQAQATQNVYVPSTEPEEEGEADDVYIMDISSNISENLNYYIDGKIQTNNNTSNCDVIEMESASADLYGINCLLTPVTVEITQNIKTTQVPVTEDLPKEPLGSTNSEAKKRRTASPPALPKIKAETDSDPMVPSCSLSLPLSISTTEAVSFHKEKSVYLSSKLKQLLQTQDKLTPAGISATEIAKLGPVCVSAPASMLPVTSSRFKRRTSSPPSSPQHSPALRDFGKPSDGKAAWTDAGLTSKKSKLESHSDSPAWSLSGRDERETVSPPCFDEYKMSKEWTASSAFSSVCNQQPLDLSSGVKQKAEGTGKTPVQWESVLDLSVHKKHCSDSEGKEFKESHSVQPTCSAVKKRKPTTCMLQKVLLNEYNGIDLPVENPADGTRSPSPCKSLEAQPDPDLGPGSGFPAPTVESTPDVCPSSPALQTPSLSSGQLPPLLIPTDPSSPPPCPPVLTVATPPPPLLPTVPLPAPSSSASPHPCPSPLSNATAQSPLPILSPTVSPSPSPIPPVEPLMSAASPGPPTLSSSSSSSSSSSSFSSSSSSSSPSPPPLSAISSVVSSGDNLEASLPMISFKQEELENEGLKPREEPQSAAEQDVVVQETFNKNFVCNVCESPFLSIKDLTKHLSIHAEEWPFKCEFCVQLFKDKTDLSEHRFLLHGVGNIFVCSVCKKEFAFLCNLQQHQRDLHPDKVCTHHEFESGTLRPQNFTDPSKAHVEHMQSLPEDPLETSKEEEELNDSSEELYTTIKIMASGIKTKDPDVRLGLNQHYPSFKPPPFQYHHRNPMGIGVTATNFTTHNIPQTFTTAIRCTKCGKGVDNMPELHKHILACASASDKKRYTPKKNPVPLKQTVQPKNGVVVLDNSGKNAFRRMGQPKRLNFSVELSKMSSNKLKLNALKKKNQLVQKAILQKNKSAKQKADLKNACESSSHICPYCNREFTYIGSLNKHAAFSCPKKPLSPPKKKVSHSSKKGGHSSPASSDKNSNSNHRRRTADAEIKMQSMQTPLGKTRARSSGPTQVPLPSSSFRSKQNVKFAASVKSKKPSSSSLRNSSPIRMAKITHVEGKKPKAVAKNHSAQLSSKTSRSLHVRVQKSKAVLQSKSTLASKKRTDRFNIKSRERSGGPVTRSLQLAAAADLSENKREDGSAKQELKDFSYSLRLASRCSPPAAPYITRQYRKVKAPAAAQFQGPFFKE.

In terms of domain architecture, SET spans 28–141 (EEVRLFPSAV…PGEELLVWYN (114 aa)). The segment at 155 to 335 (ERASARSKRS…TSEETLEDCS (181 aa)) is disordered. Basic residues predominate over residues 159–173 (ARSKRSSPKSRKGKK). Over residues 189–202 (QLKTSEPDFTSANM) the composition is skewed to polar residues. The segment covering 204-216 (DSAEGPKEDEEKP) has biased composition (basic and acidic residues). Residues 265 to 297 (DLGEEEEEEEEEDEEEEEDDDDDELEDEGEEEA) show a composition bias toward acidic residues. Residues 294 to 316 (EEEASMPNENSVKEPEIRCDEKP) are retinoblastoma protein binding. Basic and acidic residues predominate over residues 304-327 (SVKEPEIRCDEKPEDLLEEPKTTS). Lysine 347 participates in a covalent cross-link: Glycyl lysine isopeptide (Lys-Gly) (interchain with G-Cter in SUMO2). 2 C2H2-type zinc fingers span residues 360-382 (FPCQ…MHIH) and 390-412 (FKCK…ERRH). A disordered region spans residues 405–457 (RRRHERRHEAGLKRKPSQTLQPSEDLADGKASGENVASKDDSSPPSLGPDCLI). Phosphoserine is present on serine 421. The C2H2-type 3 zinc finger occupies 483–506 (HPCKYCKKVFGTHTNMRRHQRRVH). Disordered stretches follow at residues 513 to 550 (KGVR…EGEA) and 622 to 660 (EDLP…DPMV). Position 643 is a phosphoserine (serine 643). Residues lysine 651, lysine 690, and lysine 692 each participate in a glycyl lysine isopeptide (Lys-Gly) (interchain with G-Cter in SUMO2) cross-link. Residues 729–797 (TSSRFKRRTS…GRDERETVSP (69 aa)) are disordered. Positions 738–748 (SSPPSSPQHSP) are enriched in low complexity. Serine 743 bears the Phosphoserine mark. A Glycyl lysine isopeptide (Lys-Gly) (interchain with G-Cter in SUMO2) cross-link involves residue lysine 774. Serine 781, serine 785, and serine 796 each carry phosphoserine. Glycyl lysine isopeptide (Lys-Gly) (interchain with G-Cter in SUMO2) cross-links involve residues lysine 866 and lysine 879. Residues 903 to 1083 (VENPADGTRS…SPPPLSAISS (181 aa)) are disordered. The segment covering 951–969 (LQTPSLSSGQLPPLLIPTD) has biased composition (low complexity). Short sequence motifs (SH3-binding) lie at residues 970–979 (PSSPPPCPPV) and 985–998 (PPPP…LPAP). Positions 970–997 (PSSPPPCPPVLTVATPPPPLLPTVPLPA) are enriched in pro residues. Residues 1018-1027 (SPLPILSPTV) are compositionally biased toward low complexity. Pro residues predominate over residues 1028-1038 (SPSPSPIPPVE). The SH3-binding signature appears at 1028–1052 (SPSPSPIPPVEPLMSAASPGPPTLS). The segment covering 1042 to 1072 (SAASPGPPTLSSSSSSSSSSSSFSSSSSSSS) has biased composition (low complexity). 3 consecutive C2H2-type zinc fingers follow at residues 1134-1156 (FVCN…LSIH), 1162-1185 (FKCE…FLLH), and 1191-1214 (FVCS…RDLH). Residues lysine 1147 and lysine 1151 each participate in a glycyl lysine isopeptide (Lys-Gly) (interchain with G-Cter in SUMO2) cross-link. The tract at residues 1244-1265 (HMQSLPEDPLETSKEEEELNDS) is disordered. Acidic residues predominate over residues 1251-1265 (DPLETSKEEEELNDS). Glycyl lysine isopeptide (Lys-Gly) (interchain with G-Cter in SUMO2) cross-links involve residues lysine 1257 and lysine 1281. The C2H2-type 7; atypical zinc finger occupies 1333–1355 (IRCTKCGKGVDNMPELHKHILAC). The C2H2-type 8; atypical zinc finger occupies 1455–1478 (HICPYCNREFTYIGSLNKHAAFSC). Disordered stretches follow at residues 1478-1576 (CPKK…LRNS), 1589-1612 (GKKP…RSLH), and 1625-1652 (KSTL…VTRS). Residues 1486-1498 (PKKKVSHSSKKGG) are compositionally biased toward basic residues. Residues 1499 to 1511 (HSSPASSDKNSNS) are compositionally biased toward low complexity. 2 stretches are compositionally biased toward polar residues: residues 1525-1556 (QSMQ…SKQN) and 1599-1608 (HSAQLSSKTS). Residues 1635–1645 (DRFNIKSRERS) show a composition bias toward basic and acidic residues.

Belongs to the class V-like SAM-binding methyltransferase superfamily. Binds to the retinoblastoma protein (RB). Interacts with GATA3. Highly expressed in retinoblastoma cell lines and in brain tumors. Also expressed in a number of other cell lines and in brain, heart, skeletal muscle, liver and spleen. Isoform 1 is expressed in testis at much higher level than isoform 3.

It localises to the nucleus. The enzyme catalyses L-lysyl(9)-[histone H3] + 3 S-adenosyl-L-methionine = N(6),N(6),N(6)-trimethyl-L-lysyl(9)-[histone H3] + 3 S-adenosyl-L-homocysteine + 3 H(+). Its function is as follows. S-adenosyl-L-methionine-dependent histone methyltransferase that specifically methylates 'Lys-9' of histone H3. May function as a DNA-binding transcription factor. Binds to the macrophage-specific TPA-responsive element (MTE) of the HMOX1 (heme oxygenase 1) gene and may act as a transcriptional activator of this gene. This is PR domain zinc finger protein 2 (PRDM2) from Homo sapiens (Human).